The sequence spans 136 residues: uncharacterized protein (136 aa).

Belongs to the mimivirus L163/R849 family.

This is an uncharacterized protein from Acanthamoeba polyphaga mimivirus (APMV).